The sequence spans 129 residues: Glycine cleavage system H protein (129 aa).

In terms of domain architecture, Lipoyl-binding spans isoleucine 24–arginine 106. Lysine 65 is subject to N6-lipoyllysine.

The protein belongs to the GcvH family. In terms of assembly, the glycine cleavage system is composed of four proteins: P, T, L and H. The cofactor is (R)-lipoate.

Functionally, the glycine cleavage system catalyzes the degradation of glycine. The H protein shuttles the methylamine group of glycine from the P protein to the T protein. The chain is Glycine cleavage system H protein from Synechococcus sp. (strain JA-2-3B'a(2-13)) (Cyanobacteria bacterium Yellowstone B-Prime).